The sequence spans 354 residues: Protein RecA (354 aa).

67–74 (GPESSGKT) is a binding site for ATP. Residues 333 to 354 (MNEFVPSSEEQAEASLSEDHDQ) are disordered.

This sequence belongs to the RecA family.

Its subcellular location is the cytoplasm. In terms of biological role, can catalyze the hydrolysis of ATP in the presence of single-stranded DNA, the ATP-dependent uptake of single-stranded DNA by duplex DNA, and the ATP-dependent hybridization of homologous single-stranded DNAs. It interacts with LexA causing its activation and leading to its autocatalytic cleavage. This Laribacter hongkongensis (strain HLHK9) protein is Protein RecA.